The primary structure comprises 332 residues: Ribose-phosphate pyrophosphokinase (332 aa).

Residue 57-59 coordinates ATP; it reads DGE. 2 residues coordinate Mg(2+): His-150 and Asp-189. The active site involves Lys-213. D-ribose 5-phosphate contacts are provided by residues Arg-215, Asp-239, and 243 to 247; that span reads DTAGT.

This sequence belongs to the ribose-phosphate pyrophosphokinase family. Class I subfamily. In terms of assembly, homohexamer. It depends on Mg(2+) as a cofactor.

Its subcellular location is the cytoplasm. The catalysed reaction is D-ribose 5-phosphate + ATP = 5-phospho-alpha-D-ribose 1-diphosphate + AMP + H(+). It functions in the pathway metabolic intermediate biosynthesis; 5-phospho-alpha-D-ribose 1-diphosphate biosynthesis; 5-phospho-alpha-D-ribose 1-diphosphate from D-ribose 5-phosphate (route I): step 1/1. Involved in the biosynthesis of the central metabolite phospho-alpha-D-ribosyl-1-pyrophosphate (PRPP) via the transfer of pyrophosphoryl group from ATP to 1-hydroxyl of ribose-5-phosphate (Rib-5-P). This chain is Ribose-phosphate pyrophosphokinase, found in Gloeobacter violaceus (strain ATCC 29082 / PCC 7421).